The sequence spans 145 residues: uncharacterized protein (145 aa).

An N-terminal signal peptide occupies residues 1-26 (MAILLPLKSILPWCCITFSFLLSSSG).

This is an uncharacterized protein from Saccharomyces cerevisiae (strain ATCC 204508 / S288c) (Baker's yeast).